A 376-amino-acid chain; its full sequence is Histidinol-phosphate aminotransferase (376 aa).

Position 230 is an N6-(pyridoxal phosphate)lysine (Lys-230).

The protein belongs to the class-II pyridoxal-phosphate-dependent aminotransferase family. Histidinol-phosphate aminotransferase subfamily. Homodimer. It depends on pyridoxal 5'-phosphate as a cofactor.

The catalysed reaction is L-histidinol phosphate + 2-oxoglutarate = 3-(imidazol-4-yl)-2-oxopropyl phosphate + L-glutamate. It functions in the pathway amino-acid biosynthesis; L-histidine biosynthesis; L-histidine from 5-phospho-alpha-D-ribose 1-diphosphate: step 7/9. This is Histidinol-phosphate aminotransferase from Trichodesmium erythraeum (strain IMS101).